The sequence spans 183 residues: Bifunctional protein PyrR (183 aa).

The PRPP-binding motif lies at 102-114; sequence VVLVDDVLYTGRT.

Belongs to the purine/pyrimidine phosphoribosyltransferase family. PyrR subfamily. Homodimer and homohexamer; in equilibrium.

The catalysed reaction is UMP + diphosphate = 5-phospho-alpha-D-ribose 1-diphosphate + uracil. Functionally, regulates transcriptional attenuation of the pyrimidine nucleotide (pyr) operon by binding in a uridine-dependent manner to specific sites on pyr mRNA. This disrupts an antiterminator hairpin in the RNA and favors formation of a downstream transcription terminator, leading to a reduced expression of downstream genes. Also displays a weak uracil phosphoribosyltransferase activity which is not physiologically significant. This Listeria welshimeri serovar 6b (strain ATCC 35897 / DSM 20650 / CCUG 15529 / CIP 8149 / NCTC 11857 / SLCC 5334 / V8) protein is Bifunctional protein PyrR.